Here is a 257-residue protein sequence, read N- to C-terminus: GTP cyclohydrolase FolE2 (257 aa).

The protein belongs to the GTP cyclohydrolase IV family.

The enzyme catalyses GTP + H2O = 7,8-dihydroneopterin 3'-triphosphate + formate + H(+). Its pathway is cofactor biosynthesis; 7,8-dihydroneopterin triphosphate biosynthesis; 7,8-dihydroneopterin triphosphate from GTP: step 1/1. Functionally, converts GTP to 7,8-dihydroneopterin triphosphate. This chain is GTP cyclohydrolase FolE2, found in Kosmotoga olearia (strain ATCC BAA-1733 / DSM 21960 / TBF 19.5.1).